We begin with the raw amino-acid sequence, 114 residues long: Gas vesicle protein J (114 aa).

The segment at Pro-63 to Glu-114 is disordered. A compositionally biased stretch (basic and acidic residues) spans Asp-80–Ser-91. A compositionally biased stretch (polar residues) spans Ser-104 to Glu-114.

It belongs to the gas vesicle GvpA family. GvpF to GvpM interact with each other in vitro, and may form multi-subunit complex(es). Interacts with GvpA.

Its subcellular location is the gas vesicle. Functionally, a minor component of the gas vesicle, proteins GvpF to GvpM might be involved in nucleating gas vesicle formation. Gas vesicles are hollow, gas filled proteinaceous nanostructures found in some microorganisms. They allow positioning of halobacteria at the optimal depth for growth in the poorly aerated, shallow brine pools of their habitat. Expression of a 9.5 kb mc-vac DNA fragment containing 2 divergently transcribed regions (gvpD-gvpE-gvpF-gvpG-gvpH-gvpI-gvpJ-gvpK-gvpL-gvpM and gvpA-gvpC-gvpN-gvpO) allows H.volcanii to produce gas vesicles. In Haloferax mediterranei (strain ATCC 33500 / DSM 1411 / JCM 8866 / NBRC 14739 / NCIMB 2177 / R-4) (Halobacterium mediterranei), this protein is Gas vesicle protein J.